Reading from the N-terminus, the 260-residue chain is Triosephosphate isomerase (260 aa).

Residue 11-13 (NWK) participates in substrate binding. The Electrophile role is filled by His-103. The active-site Proton acceptor is the Glu-175. Residues Gly-181, Ser-220, and 241–242 (GG) each bind substrate.

The protein belongs to the triosephosphate isomerase family. Homodimer.

It is found in the cytoplasm. The catalysed reaction is D-glyceraldehyde 3-phosphate = dihydroxyacetone phosphate. It functions in the pathway carbohydrate biosynthesis; gluconeogenesis. It participates in carbohydrate degradation; glycolysis; D-glyceraldehyde 3-phosphate from glycerone phosphate: step 1/1. Involved in the gluconeogenesis. Catalyzes stereospecifically the conversion of dihydroxyacetone phosphate (DHAP) to D-glyceraldehyde-3-phosphate (G3P). The sequence is that of Triosephosphate isomerase from Shewanella sp. (strain MR-4).